A 227-amino-acid chain; its full sequence is Probable septum site-determining protein MinC (227 aa).

The protein belongs to the MinC family. Interacts with MinD and FtsZ.

Functionally, cell division inhibitor that blocks the formation of polar Z ring septums. Rapidly oscillates between the poles of the cell to destabilize FtsZ filaments that have formed before they mature into polar Z rings. Prevents FtsZ polymerization. The sequence is that of Probable septum site-determining protein MinC from Clostridioides difficile (strain 630) (Peptoclostridium difficile).